The following is a 573-amino-acid chain: Poly(ribitol-phosphate) beta-N-acetylglucosaminyltransferase TarS (573 aa).

Residues proline 9, aspartate 41, asparagine 68, arginine 76, 92–94 (DSD), arginine 127, and glutamate 178 contribute to the UDP-N-acetyl-alpha-D-glucosamine site. A Mn(2+)-binding site is contributed by aspartate 94. The active-site Proton acceptor is aspartate 179. UDP-N-acetyl-alpha-D-glucosamine contacts are provided by residues arginine 207 and 211–213 (HMS).

This sequence belongs to the glycosyltransferase 2 family. Homotrimer. Requires Mn(2+) as cofactor.

The enzyme catalyses 4-O-[(D-ribitylphospho)(n)-di{(2R)-glycerylphospho}]-N-acetyl-beta-D-mannosaminyl-(1-&gt;4)-N-acetyl-alpha-D-glucosaminyl di-trans,octa-cis-undecaprenyl diphosphate + n UDP-N-acetyl-alpha-D-glucosamine = 4-O-([2-N-acetyl-beta-D-glucosaminyl-1-D-ribitylphospho](n)-di{[2R]-1-glycerylphospho})-N-acetyl-beta-D-mannosaminyl-(1-&gt;4)-N-acetyl-alpha-D-glucosaminyl di-trans,octa-cis-undecaprenyl diphosphate + n UDP + n H(+). The protein operates within cell wall biogenesis; poly(ribitol phosphate) teichoic acid biosynthesis. Its function is as follows. Attaches beta-O-GlcNAc (beta-O-N-acetyl-D-glucosamine) residues to the C4 position of poly(RboP)-wall teichoic acids (WTAs). Prefers UDP-GlcNAc as a donor substrate and is specific for poly(ribitol phosphate) WTAs. Can also use UDP-Glc and UDP-GalNAc, but not UDP-galactose or UDP-glucuronic acid. Mediates beta-lactam resistance in methicillin resistant Staphylococcus aureus (MRSA) strains. In Staphylococcus aureus (strain MW2), this protein is Poly(ribitol-phosphate) beta-N-acetylglucosaminyltransferase TarS.